We begin with the raw amino-acid sequence, 263 residues long: HTH-type transcriptional repressor NanR (263 aa).

A disordered region spans residues 1–22 (MGLMNAFDSQTEDSSPAIGRNL). The HTH gntR-type domain maps to 30–98 (KKLSEMVEEE…NGERARVSRP (69 aa)). The H-T-H motif DNA-binding region spans 58-77 (ERELMAFFNVGRPSVREALA).

Belongs to the NanR family.

In terms of biological role, transcriptional repressor that controls expression of the genes required for the catabolism of sialic acids. In Escherichia coli (strain 55989 / EAEC), this protein is HTH-type transcriptional repressor NanR.